Here is a 474-residue protein sequence, read N- to C-terminus: ATP synthase subunit beta (474 aa).

ATP is bound at residue 152–159; it reads GGAGVGKT.

This sequence belongs to the ATPase alpha/beta chains family. In terms of assembly, F-type ATPases have 2 components, CF(1) - the catalytic core - and CF(0) - the membrane proton channel. CF(1) has five subunits: alpha(3), beta(3), gamma(1), delta(1), epsilon(1). CF(0) has three main subunits: a(1), b(2) and c(9-12). The alpha and beta chains form an alternating ring which encloses part of the gamma chain. CF(1) is attached to CF(0) by a central stalk formed by the gamma and epsilon chains, while a peripheral stalk is formed by the delta and b chains.

It is found in the cell inner membrane. The catalysed reaction is ATP + H2O + 4 H(+)(in) = ADP + phosphate + 5 H(+)(out). Its function is as follows. Produces ATP from ADP in the presence of a proton gradient across the membrane. The catalytic sites are hosted primarily by the beta subunits. This chain is ATP synthase subunit beta, found in Magnetococcus marinus (strain ATCC BAA-1437 / JCM 17883 / MC-1).